The sequence spans 154 residues: Aspartate carbamoyltransferase regulatory chain (154 aa).

Positions 110, 115, 136, and 139 each coordinate Zn(2+).

The protein belongs to the PyrI family. Contains catalytic and regulatory chains. Zn(2+) is required as a cofactor.

Involved in allosteric regulation of aspartate carbamoyltransferase. In Halobacterium salinarum (strain ATCC 700922 / JCM 11081 / NRC-1) (Halobacterium halobium), this protein is Aspartate carbamoyltransferase regulatory chain.